A 303-amino-acid chain; its full sequence is Probable cell division protein WhiA (303 aa).

Residues 272-303 (SIQQIADSLETPLSKSGVNHRLRKINKIADEL) constitute a DNA-binding region (H-T-H motif).

It belongs to the WhiA family.

In terms of biological role, involved in cell division and chromosome segregation. The protein is Probable cell division protein WhiA of Streptococcus agalactiae serotype Ia (strain ATCC 27591 / A909 / CDC SS700).